Here is a 23-residue protein sequence, read N- to C-terminus: Defensin D4 (23 aa).

This sequence belongs to the DEFL family. Group IV subfamily. In terms of tissue distribution, distributed in the epidermal cell layer of leaves and in the subepidermal layer region of stems. Not in roots.

The protein localises to the secreted. Its subcellular location is the cell wall. Functionally, antimicrobial peptide. Active against Fusarium spp., Gram-positive and Gram-negative bacterial pathogens. The polypeptide is Defensin D4 (Spinacia oleracea (Spinach)).